We begin with the raw amino-acid sequence, 294 residues long: Nucleotide-binding protein A2cp1_0165 (294 aa).

ATP is bound at residue 17–24 (GVSGSGKS). GTP is bound at residue 68–71 (DARE).

The protein belongs to the RapZ-like family.

Its function is as follows. Displays ATPase and GTPase activities. The polypeptide is Nucleotide-binding protein A2cp1_0165 (Anaeromyxobacter dehalogenans (strain 2CP-1 / ATCC BAA-258)).